A 336-amino-acid polypeptide reads, in one-letter code: Putative cysteine synthase (336 aa).

Lysine 41 bears the N6-(pyridoxal phosphate)lysine mark. Pyridoxal 5'-phosphate contacts are provided by residues asparagine 71, 179-183, and serine 269; that span reads GTGGS.

This sequence belongs to the cysteine synthase/cystathionine beta-synthase family. Pyridoxal 5'-phosphate serves as cofactor.

It catalyses the reaction O-acetyl-L-serine + hydrogen sulfide = L-cysteine + acetate. In terms of biological role, as it is highly similar to bacterial and plant cysteine synthases, it is possible that it catalyzes a related reaction. This chain is Putative cysteine synthase, found in Sinorhizobium fredii (strain NBRC 101917 / NGR234).